The sequence spans 220 residues: Putative 3-methyladenine DNA glycosylase (220 aa).

It belongs to the DNA glycosylase MPG family.

This Rickettsia bellii (strain RML369-C) protein is Putative 3-methyladenine DNA glycosylase.